The primary structure comprises 582 residues: Potassium voltage-gated channel subfamily KQT member 1 (582 aa).

Residues R1–W31 are Cytoplasmic-facing. A helical transmembrane segment spans residues K32–L53. At S54–T64 the chain is on the extracellular side. Residues G65–W87 form a helical membrane-spanning segment. The Cytoplasmic segment spans residues S88 to R103. The helical transmembrane segment at F104 to K129 threads the bilayer. Residues G130–A137 are Extracellular-facing. Residues I138 to D153 form a helical; Voltage-sensor membrane-spanning segment. Residues M149 to G157 form an interaction with KCNE3 region. Residues R154–Q171 lie on the Cytoplasmic side of the membrane. Q155 serves as a coordination point for a 1,2-diacyl-sn-glycero-3-phospho-(1D-myo-inositol-4,5-bisphosphate). The chain crosses the membrane as a helical span at residues E172–A194. Residues E195–Y210 lie on the Extracellular side of the membrane. N-linked (GlcNAc...) asparagine glycosylation occurs at N200. The segment at residues A211 to P231 is an intramembrane region (pore-forming). Topologically, residues Q232–T233 are extracellular. Residues W234–G259 traverse the membrane as a helical segment. At S260 to S582 the chain is on the cytoplasmic side. Positions A281 to Y293 are interaction with CALM. A phosphoserine mark is found at S318 and S320. An interaction with CALM; calcium-dependent region spans residues K426–F440. The interaction with KCNE1 C-terminus stretch occupies residues P446–L483. A coiled-coil region spans residues S496–H532. The segment at I499 to L527 is interaction with AKAP9. Positions G500–H531 are C-terminal assembly domain (tetramerization). Residues L530–S582 are disordered.

Belongs to the potassium channel family. KQT (TC 1.A.1.15) subfamily. Kv7.1/KCNQ1 sub-subfamily. Tetramer. Heterotetramer with KCNE1; targets to the membrane raft. Interacts (via C-terminus) with CALM; forms a heterooctameric structure (with 4:4 KCNQ1:CALM stoichiometry) in a calcium-independent manner. Interacts with AKAP9; targets protein kinase A (PKA) catalytic and regulatory subunits and protein phosphatase 1 (PP1) to the KCNQ1-KCNE1 complex, allowing PKA-mediated phosphorylation and increase of delayed rectifier potassium channel activity. Interacts with KCNE2; form a heterooligomer complex that targets to the membrane raft and leading to currents with an apparently instantaneous activation, a rapid deactivation process and a linear current-voltage relationship and decreases the amplitude of the outward current. Interacts with AP2M1; mediates estrogen-induced internalization via clathrin-coated vesicles. Interacts with NEDD4L; promotes internalization and decreases I(Ks) currents. Interacts with USP2; counteracts the NEDD4L-specific down-regulation of I(Ks) and restore plasma membrane localization. Heterotetramer with KCNQ5; has a voltage-gated potassium channel activity. Interacts with KCNE3; four KCNE3 molecules are bound to one KCNQ1 tetramer (4:4 KCNQ1:KCNE3 stoichiometry); alters membrane raft localization; affects KCNQ1 structure and gating properties. Interacts with KCNE4; impairs KCNQ1 localization in lipid rafts and inhibits voltage-gated potassium channel activity. Interacts with KCNE5; impairs KCNQ1 localization in lipid rafts and only conducts current upon strong and continued depolarization. In terms of processing, phosphorylated by PKA; increases delayed rectifier potassium channel activity of the KCNQ1-KCNE1 complex through a macromolecular complex that includes PKA, PP1, and the targeting protein AKAP9. Ubiquitinated by NEDD4L; promotes internalization. The ubiquitinylated form is internalized through a clathrin-mediated endocytosis by interacting with AP2M1 and is recycled back to the cell membrane via RAB4A and RAB11A. Post-translationally, deubiquitinated by USP2; counteracts the NEDD4L-specific down-regulation of I(Ks) and restores the membrane localization.

The protein localises to the cell membrane. The protein resides in the cytoplasmic vesicle membrane. It is found in the early endosome. Its subcellular location is the membrane raft. It localises to the endoplasmic reticulum. The protein localises to the basolateral cell membrane. It carries out the reaction K(+)(in) = K(+)(out). With respect to regulation, PIP2 molecule is essential to activate KCNQ channels by inducing the coupling of the voltage-sensing domain (VSD) and the pore-forming domain (PD). Upon channel activation, PIP2 disrupts the VSD-calmodulin/CALM interactions, causing the release of CALM from the VSD which triggers the opening of the gate. Calcium potentiates KCNQ1 channel current through calcium-bound CALM. Calcium-bound CALM competes with PIP2 to stabilize the channel open state. In terms of biological role, pore-forming subunit of the voltage-gated potassium (Kv) channel involved in the regulation of cardiomyocyte excitability and important in normal development and functions of myocardium, inner ear, stomach and colon. Associates with KCNE beta subunits that modulates current kinetics. Induces a voltage-dependent by rapidly activating and slowly deactivating potassium-selective outward current. Also promotes a delayed voltage activated potassium current showing outward rectification characteristic. During beta-adrenergic receptor stimulation participates in cardiac repolarization by associating with KCNE1 to form the I(Ks) cardiac potassium current that increases the amplitude and slows down the activation kinetics of outward potassium current I(Ks). Muscarinic agonist oxotremorine-M strongly suppresses KCNQ1/KCNE1 current. When associated with KCNE3, forms the potassium channel that is important for cyclic AMP-stimulated intestinal secretion of chloride ions. This interaction with KCNE3 is reduced by 17beta-estradiol, resulting in the reduction of currents. During conditions of increased substrate load, maintains the driving force for proximal tubular and intestinal sodium ions absorption, gastric acid secretion, and cAMP-induced jejunal chloride ions secretion. Allows the provision of potassium ions to the luminal membrane of the secretory canaliculus in the resting state as well as during stimulated acid secretion. When associated with KCNE2, forms a heterooligomer complex leading to currents with an apparently instantaneous activation, a rapid deactivation process and a linear current-voltage relationship and decreases the amplitude of the outward current. When associated with KCNE4, inhibits voltage-gated potassium channel activity. When associated with KCNE5, this complex only conducts current upon strong and continued depolarization. Also forms a heterotetramer with KCNQ5 that has a voltage-gated potassium channel activity. Binds with phosphatidylinositol 4,5-bisphosphate. This is Potassium voltage-gated channel subfamily KQT member 1 from Felis catus (Cat).